The primary structure comprises 212 residues: MPIHEIRHPLIRHKLGLMRRADISTKSFRELAQEVGALLTYEATKDLPLENYRIEGWCGPVEVEKIAGKKITVVPILRAGIGMLDGVLRLIPNAKVSVVGLSRDEETLVAHTYVEKLVGEIDQRLALIVDPMLATGGSMAATVDMLKKAGCKEIRALVLVAAPEGIRLLERTHPDVTIYTAAIDQRLNENGYIIPGLGDAGDKVFGTKQKPS.

Residues Arg78, Arg103, and 130–138 contribute to the 5-phospho-alpha-D-ribose 1-diphosphate site; that span reads DPMLATGGS. Residues Ile193 and 198-200 contribute to the uracil site; that span reads GDA. Residue Asp199 coordinates 5-phospho-alpha-D-ribose 1-diphosphate.

The protein belongs to the UPRTase family. The cofactor is Mg(2+).

The catalysed reaction is UMP + diphosphate = 5-phospho-alpha-D-ribose 1-diphosphate + uracil. Its pathway is pyrimidine metabolism; UMP biosynthesis via salvage pathway; UMP from uracil: step 1/1. Allosterically activated by GTP. In terms of biological role, catalyzes the conversion of uracil and 5-phospho-alpha-D-ribose 1-diphosphate (PRPP) to UMP and diphosphate. This chain is Uracil phosphoribosyltransferase, found in Azotobacter vinelandii (strain DJ / ATCC BAA-1303).